The chain runs to 268 residues: Type-5 uracil-DNA glycosylase (268 aa).

Residues 1–29 (MHPKTGRAFRSPVEPGSGWPGDPATPQTP) are disordered. Residues Cys-57, Cys-60, Cys-161, and Cys-176 each coordinate [4Fe-4S] cluster.

Belongs to the uracil-DNA glycosylase (UDG) superfamily. Type 5 (UDGb) family.

DNA glycosylase with broad substrate specificity. In Mycobacterium bovis (strain ATCC BAA-935 / AF2122/97), this protein is Type-5 uracil-DNA glycosylase.